Reading from the N-terminus, the 387-residue chain is Probable peptidoglycan glycosyltransferase FtsW (387 aa).

A run of 9 helical transmembrane segments spans residues 20 to 40, 61 to 81, 86 to 106, 149 to 169, 172 to 192, 194 to 214, 284 to 304, 322 to 342, and 349 to 369; these read LYLLGAAVALMGLGWVMVGSA, LFLLLGLVTAFGVWRIRLAFW, PVMLLLGLGLLLLTLIPGIGV, TIRGFLFPVGVFAMAGLLLLL, DFGAVVVLFATLLGMLFLGGA, LWHFLLLAALGGASLAALAWY, LMGSLAVIALFVVFIYRVLLI, GLGIWIGLQAFINLGVNMGVL, and LPLMSAGGSSSIVTCVAVALI.

It belongs to the SEDS family. FtsW subfamily.

It is found in the cell inner membrane. The catalysed reaction is [GlcNAc-(1-&gt;4)-Mur2Ac(oyl-L-Ala-gamma-D-Glu-L-Lys-D-Ala-D-Ala)](n)-di-trans,octa-cis-undecaprenyl diphosphate + beta-D-GlcNAc-(1-&gt;4)-Mur2Ac(oyl-L-Ala-gamma-D-Glu-L-Lys-D-Ala-D-Ala)-di-trans,octa-cis-undecaprenyl diphosphate = [GlcNAc-(1-&gt;4)-Mur2Ac(oyl-L-Ala-gamma-D-Glu-L-Lys-D-Ala-D-Ala)](n+1)-di-trans,octa-cis-undecaprenyl diphosphate + di-trans,octa-cis-undecaprenyl diphosphate + H(+). The protein operates within cell wall biogenesis; peptidoglycan biosynthesis. Its function is as follows. Peptidoglycan polymerase that is essential for cell division. The protein is Probable peptidoglycan glycosyltransferase FtsW of Nitrosococcus halophilus (strain Nc4).